Reading from the N-terminus, the 517-residue chain is Membrane-bound lytic murein transglycosylase F (517 aa).

Positions 1 to 32 are cleaved as a signal peptide; sequence MKKFKINYLLIGIVTLLLAAALWPSIPWFGKA. The segment at 33–269 is non-LT domain; it reads ENRIAAIQSR…RLEEKYLGHG (237 aa). Positions 270–517 are LT domain; sequence GDFDYVDTRS…PNTLVQAPRR (248 aa). Residue Glu314 is part of the active site.

In the N-terminal section; belongs to the bacterial solute-binding protein 3 family. The protein in the C-terminal section; belongs to the transglycosylase Slt family.

Its subcellular location is the cell outer membrane. It catalyses the reaction Exolytic cleavage of the (1-&gt;4)-beta-glycosidic linkage between N-acetylmuramic acid (MurNAc) and N-acetylglucosamine (GlcNAc) residues in peptidoglycan, from either the reducing or the non-reducing ends of the peptidoglycan chains, with concomitant formation of a 1,6-anhydrobond in the MurNAc residue.. Its function is as follows. Murein-degrading enzyme that degrades murein glycan strands and insoluble, high-molecular weight murein sacculi, with the concomitant formation of a 1,6-anhydromuramoyl product. Lytic transglycosylases (LTs) play an integral role in the metabolism of the peptidoglycan (PG) sacculus. Their lytic action creates space within the PG sacculus to allow for its expansion as well as for the insertion of various structures such as secretion systems and flagella. In Enterobacter sp. (strain 638), this protein is Membrane-bound lytic murein transglycosylase F.